Reading from the N-terminus, the 224-residue chain is Claudin-19 (224 aa).

At 1 to 7 (MANSGLQ) the chain is on the cytoplasmic side. A helical membrane pass occupies residues 8–28 (LLGYFLALGGWVGIIASTALP). Over 29–81 (QWKQSSYAGDAIITAVGLYEGLWMSCASQSTGQVQCKLYDSLLALDGHIQSAR) the chain is Extracellular. Cys-54 and Cys-64 are disulfide-bonded. The chain crosses the membrane as a helical span at residues 82 to 102 (ALMVVAVLLGFVAMVLSVVGM). The Cytoplasmic segment spans residues 103-117 (KCTRVGDSNPTAKGR). A helical transmembrane segment spans residues 118-138 (VAISGGALFLLAGLCTLTAVS). At 139 to 160 (WYATLVTQEFFNPSTPVNARYE) the chain is on the extracellular side. Residues 161–181 (FGPALFVGWASAGLAILGGSF) traverse the membrane as a helical segment. Over 182 to 224 (LCCTCPEPERANSIPQPYRSGPSTAAREPVVKLSTSVKGPLGV) the chain is Cytoplasmic.

This sequence belongs to the claudin family. Can form homo- and heteropolymeric tight junction strands. Interacts with other claudins including CLDN3, CLDN10, CLDN16 and CLDN18 with highest affinity for CLDN16. Interacts (via PDZ-binding motif TRV) with TJP1 (via PDZ domain).

It is found in the cell junction. Its subcellular location is the tight junction. The protein localises to the cell membrane. It catalyses the reaction Mg(2+)(in) = Mg(2+)(out). The enzyme catalyses Ca(2+)(in) = Ca(2+)(out). The catalysed reaction is Na(+)(in) = Na(+)(out). It carries out the reaction K(+)(in) = K(+)(out). It catalyses the reaction Rb(+)(in) = Rb(+)(out). The enzyme catalyses Cs(+)(in) = Cs(+)(out). The catalysed reaction is Li(+)(in) = Li(+)(out). In terms of biological role, forms paracellular channels: coassembles with CLDN16 into tight junction strands with cation-selective channels through the strands, conveying epithelial permeability in a process known as paracellular tight junction permeability. Involved in the maintenance of ion gradients along the nephron. In the thick ascending limb (TAL) of Henle's loop, facilitates sodium paracellular permeability from the interstitial compartment to the lumen, contributing to the lumen-positive transepithelial potential that drives paracellular magnesium and calcium reabsorption. Forms paracellular barriers on its own. In the peripheral nervous system, represents a major constituent of the tight junctions in Schwann cells and contributes to electrical sealing. During retinal neurogenesis, may regulate the barrier properties of tight junctions in retinal pigment epithelium, required for proper retinal tissue differentiation and vision. The polypeptide is Claudin-19 (Rattus norvegicus (Rat)).